A 147-amino-acid polypeptide reads, in one-letter code: Elongation factor Tu (147 aa).

Belongs to the GTP-binding elongation factor family. EF-Tu/EF-1A subfamily. As to quaternary structure, monomer.

Its subcellular location is the cytoplasm. In terms of biological role, this protein promotes the GTP-dependent binding of aminoacyl-tRNA to the A-site of ribosomes during protein biosynthesis. In Fructilactobacillus sanfranciscensis (Lactobacillus sanfranciscensis), this protein is Elongation factor Tu (tuf).